Here is a 390-residue protein sequence, read N- to C-terminus: Type II methyltransferase M.SacI (390 aa).

An SAM-dependent MTase C5-type domain is found at 5–371 (LPVISLFSGA…RALMEQLGYL (367 aa)). Cys96 is an active-site residue.

This sequence belongs to the class I-like SAM-binding methyltransferase superfamily. C5-methyltransferase family.

The enzyme catalyses a 2'-deoxycytidine in DNA + S-adenosyl-L-methionine = a 5-methyl-2'-deoxycytidine in DNA + S-adenosyl-L-homocysteine + H(+). Its function is as follows. A beta methylase recognizes the double-stranded sequence 5'-GAGCTC-3', methylates C-4 on both strands, and protects the DNA from cleavage by the SacI endonuclease. This is Type II methyltransferase M.SacI from Streptomyces achromogenes.